Reading from the N-terminus, the 287-residue chain is Phosphatidylserine decarboxylase proenzyme (287 aa).

Catalysis depends on charge relay system; for autoendoproteolytic cleavage activity residues D90, H147, and S252. S252 (schiff-base intermediate with substrate; via pyruvic acid; for decarboxylase activity) is an active-site residue. S252 carries the post-translational modification Pyruvic acid (Ser); by autocatalysis.

The protein belongs to the phosphatidylserine decarboxylase family. PSD-B subfamily. Prokaryotic type I sub-subfamily. As to quaternary structure, heterodimer of a large membrane-associated beta subunit and a small pyruvoyl-containing alpha subunit. It depends on pyruvate as a cofactor. In terms of processing, is synthesized initially as an inactive proenzyme. Formation of the active enzyme involves a self-maturation process in which the active site pyruvoyl group is generated from an internal serine residue via an autocatalytic post-translational modification. Two non-identical subunits are generated from the proenzyme in this reaction, and the pyruvate is formed at the N-terminus of the alpha chain, which is derived from the carboxyl end of the proenzyme. The autoendoproteolytic cleavage occurs by a canonical serine protease mechanism, in which the side chain hydroxyl group of the serine supplies its oxygen atom to form the C-terminus of the beta chain, while the remainder of the serine residue undergoes an oxidative deamination to produce ammonia and the pyruvoyl prosthetic group on the alpha chain. During this reaction, the Ser that is part of the protease active site of the proenzyme becomes the pyruvoyl prosthetic group, which constitutes an essential element of the active site of the mature decarboxylase.

The protein resides in the cell membrane. The catalysed reaction is a 1,2-diacyl-sn-glycero-3-phospho-L-serine + H(+) = a 1,2-diacyl-sn-glycero-3-phosphoethanolamine + CO2. It participates in phospholipid metabolism; phosphatidylethanolamine biosynthesis; phosphatidylethanolamine from CDP-diacylglycerol: step 2/2. Functionally, catalyzes the formation of phosphatidylethanolamine (PtdEtn) from phosphatidylserine (PtdSer). The chain is Phosphatidylserine decarboxylase proenzyme from Pseudomonas putida (strain ATCC 47054 / DSM 6125 / CFBP 8728 / NCIMB 11950 / KT2440).